Reading from the N-terminus, the 322-residue chain is MSTEFEKKMEEHIDSCSLEQLRDILVNKNGDAKLTNRFRALFNLKCVAEEFAQRPEEAQRAVEYICEAFADSSELLKHEVAYVLGQTGNLACAATLREVMLDHAQQCMVRHEASEALGALGDAASLGALERSRREDPSEEVRQTSELAIERIRWQASGAAATEQLQQSLYSSVDPAPPLSLEKDYDVPQLQALLNDQRAPLFERYRAMFRLRDIGSDEACYALASGFDDPSALFKHEIAYVFGQIGNPCVVPHLQEVLKREHEAPMVRHEAAEALGSIATDDVLPVLKRHLQDKDEVVRESAAIALDMYDYENSNELEYAPA.

4 HEAT-like PBS-type repeats span residues 76–102 (LKHE…VMLD), 109–135 (VRHE…SRRE), 234–260 (FKHE…VLKR), and 267–293 (VRHE…HLQD). 8 residues coordinate Fe cation: H78, E79, H111, E112, H236, E237, H269, and E270.

Belongs to the deoxyhypusine hydroxylase family. Requires Fe(2+) as cofactor.

The protein localises to the cytoplasm. The protein resides in the nucleus. The enzyme catalyses [eIF5A protein]-deoxyhypusine + AH2 + O2 = [eIF5A protein]-hypusine + A + H2O. The protein operates within protein modification; eIF5A hypusination. Its function is as follows. Catalyzes the hydroxylation of the N(6)-(4-aminobutyl)-L-lysine intermediate to form hypusine, an essential post-translational modification only found in mature eIF-5A factor. This is Deoxyhypusine hydroxylase from Eremothecium gossypii (strain ATCC 10895 / CBS 109.51 / FGSC 9923 / NRRL Y-1056) (Yeast).